A 74-amino-acid polypeptide reads, in one-letter code: Brevinin-2CG1 (74 aa).

A signal peptide spans 1–22 (MFTMKKSMLVLFFLGTISLSLC). The propeptide at 23 to 39 (EEERNADEDDGEMTEEV) is removed in mature form. Residues Cys-68 and Cys-74 are joined by a disulfide bond.

Expressed by the skin glands.

The protein localises to the secreted. In terms of biological role, antimicrobial peptide active against a variety of Gram-positive and some Gram-negative bacterial strains. Has antifungal activity against a slime mold isolate. Has hemolytic activity against human erythrocytes. The polypeptide is Brevinin-2CG1 (Amolops chunganensis (Chungan torrent frog)).